The following is a 512-amino-acid chain: Threonine synthase (512 aa).

The residue at position 121 (lysine 121) is an N6-(pyridoxal phosphate)lysine. Residues glycine 273, asparagine 274, phenylalanine 275, aspartate 277, and threonine 445 each coordinate pyridoxal 5'-phosphate.

This sequence belongs to the threonine synthase family. Pyridoxal 5'-phosphate serves as cofactor.

It catalyses the reaction O-phospho-L-homoserine + H2O = L-threonine + phosphate. It functions in the pathway amino-acid biosynthesis; L-threonine biosynthesis; L-threonine from L-aspartate: step 5/5. Functionally, catalyzes the gamma-elimination of phosphate from L-phosphohomoserine and the beta-addition of water to produce L-threonine. In Eremothecium gossypii (strain ATCC 10895 / CBS 109.51 / FGSC 9923 / NRRL Y-1056) (Yeast), this protein is Threonine synthase (THR4).